A 1178-amino-acid polypeptide reads, in one-letter code: Autophagy-related protein 11 (1178 aa).

Coiled-coil stretches lie at residues 538–572 and 696–850; these read EDEE…IKET and SQAN…SYAE.

It belongs to the ATG11 family. As to quaternary structure, homodimer and potential homooligomers. Interacts with ATG1 kinase. Interacts with the ATG19 cargo protein transporter. Interacts with the ATG34 cargo protein transporter. Interacts with ATG9. Interacts with ATG17. Interacts with ATG20. Interacts with ATG30. Interacts with ATG32; to recruit ATG11 to mitochondria. Interacts with ATG36. Interacts with YPT1. Post-translationally, acetylated by the NuA4 histone acetyltransferase (HAT) complex.

Its subcellular location is the preautophagosomal structure membrane. The protein localises to the vacuole membrane. Functionally, involved in cytoplasm to vacuole transport (Cvt), pexophagy, mitophagy and nucleophagy. Recruits mitochondria for their selective degradation via autophagy (mitophagy) during starvation, through its interaction with ATG32. Works as scaffold proteins that recruit ATG proteins to the pre-autophagosome (PAS), the site of vesicle/autophagosome formation. Required for ATG9 anterograde transport from the mitochondria to the PAS. Also recruits the ATG19-prAPE1 complex to the PAS. Required for the Cvt vesicles completion. Plays a significant role in life span extension. The chain is Autophagy-related protein 11 (ATG11) from Saccharomyces cerevisiae (strain ATCC 204508 / S288c) (Baker's yeast).